Reading from the N-terminus, the 199-residue chain is Holliday junction branch migration complex subunit RuvA (199 aa).

The domain I stretch occupies residues 1-64; it reads MIALLTGKLA…EDAINLYGFR (64 aa). The interval 65–143 is domain II; the sequence is TQQEKELFQL…KLGLAQPQAG (79 aa). The flexible linker stretch occupies residues 144 to 148; the sequence is GATAP. Residues 149-199 form a domain III region; sequence AKQEIRDDVLSALINLGYKEAVVQKALAELKVTEDATVELVLKQALKILMK.

Belongs to the RuvA family. As to quaternary structure, homotetramer. Forms an RuvA(8)-RuvB(12)-Holliday junction (HJ) complex. HJ DNA is sandwiched between 2 RuvA tetramers; dsDNA enters through RuvA and exits via RuvB. An RuvB hexamer assembles on each DNA strand where it exits the tetramer. Each RuvB hexamer is contacted by two RuvA subunits (via domain III) on 2 adjacent RuvB subunits; this complex drives branch migration. In the full resolvosome a probable DNA-RuvA(4)-RuvB(12)-RuvC(2) complex forms which resolves the HJ.

The protein resides in the cytoplasm. Functionally, the RuvA-RuvB-RuvC complex processes Holliday junction (HJ) DNA during genetic recombination and DNA repair, while the RuvA-RuvB complex plays an important role in the rescue of blocked DNA replication forks via replication fork reversal (RFR). RuvA specifically binds to HJ cruciform DNA, conferring on it an open structure. The RuvB hexamer acts as an ATP-dependent pump, pulling dsDNA into and through the RuvAB complex. HJ branch migration allows RuvC to scan DNA until it finds its consensus sequence, where it cleaves and resolves the cruciform DNA. This is Holliday junction branch migration complex subunit RuvA from Geobacter sp. (strain M21).